The sequence spans 236 residues: Small ribosomal subunit protein uS2c (236 aa).

It belongs to the universal ribosomal protein uS2 family.

Its subcellular location is the plastid. The protein localises to the chloroplast. The polypeptide is Small ribosomal subunit protein uS2c (rps2) (Oenothera parviflora (Small-flowered evening primrose)).